The primary structure comprises 343 residues: uncharacterized protein (343 aa).

Disordered stretches follow at residues 1-27 (MIRE…ERMT) and 205-247 (SGGL…SKRQ). Residues 16 to 27 (RARDSRAQERMT) are compositionally biased toward basic and acidic residues. The segment covering 219-228 (GQDDGNTDDG) has biased composition (acidic residues). Over residues 229–247 (NDVHQKGRGEVESKTSKRQ) the composition is skewed to basic and acidic residues.

Its function is as follows. Dispensable for normal development and fertility. This is an uncharacterized protein from Bos taurus (Bovine).